Here is a 161-residue protein sequence, read N- to C-terminus: Cytochrome c-type biogenesis protein CcmE (161 aa).

Topologically, residues 1 to 8 are cytoplasmic; that stretch reads MNPRRQKR. A helical; Signal-anchor for type II membrane protein transmembrane segment spans residues 9–29; that stretch reads LGIILAILIGVSATIGLMIYA. At 30-161 the chain is on the periplasmic side; that stretch reads LNQNMDLFYT…SEEQKQGSGQ (132 aa). Heme is bound by residues H129 and Y133.

The protein belongs to the CcmE/CycJ family.

It localises to the cell inner membrane. Heme chaperone required for the biogenesis of c-type cytochromes. Transiently binds heme delivered by CcmC and transfers the heme to apo-cytochromes in a process facilitated by CcmF and CcmH. This chain is Cytochrome c-type biogenesis protein CcmE, found in Vibrio vulnificus (strain CMCP6).